We begin with the raw amino-acid sequence, 352 residues long: Long-chain-alcohol O-fatty-acyltransferase (352 aa).

The next 8 helical transmembrane spans lie at 13–33, 34–54, 67–87, 128–148, 155–175, 239–259, 267–287, and 303–323; these read VWIS…VAPH, GGAL…FLPL, LYLV…LGPL, KVVL…IYEF, FVIS…TLAA, VAGA…VFFF, SWEV…EMVV, and GALT…PQLV.

The protein belongs to the wax synthase family.

It localises to the microsome membrane. The catalysed reaction is a long chain fatty alcohol + a fatty acyl-CoA = a wax ester + CoA. In terms of biological role, catalyzes the final step in the synthesis of long-chain linear esters (waxes). Has activity with both saturated and monounsaturated acyl-CoA ranging from 14 to 24 carbons in length, but C20:1 acyl-CoA is the preferred substrate. This chain is Long-chain-alcohol O-fatty-acyltransferase, found in Simmondsia chinensis (Jojoba).